We begin with the raw amino-acid sequence, 181 residues long: Ribonuclease HII (181 aa).

Residues 1-181 form the RNase H type-2 domain; it reads MICGIDEVGR…SLHRKSFRLI (181 aa). A divalent metal cation contacts are provided by Asp-6, Glu-7, and Asp-98.

Belongs to the RNase HII family. Mn(2+) is required as a cofactor. It depends on Mg(2+) as a cofactor.

It localises to the cytoplasm. The catalysed reaction is Endonucleolytic cleavage to 5'-phosphomonoester.. Its function is as follows. Endonuclease that specifically degrades the RNA of RNA-DNA hybrids. The polypeptide is Ribonuclease HII (Borrelia recurrentis (strain A1)).